Here is a 221-residue protein sequence, read N- to C-terminus: Protein N-terminal glutamine amidohydrolase (221 aa).

The residue at position 2 (Ser2) is an N-acetylserine. Catalysis depends on residues Cys23, His79, and Asp97.

This sequence belongs to the NTAQ1 family. As to quaternary structure, monomer.

It carries out the reaction N-terminal L-glutaminyl-[protein] + H2O = N-terminal L-glutamyl-[protein] + NH4(+). Functionally, mediates the side-chain deamidation of N-terminal glutamine residues to glutamate, an important step in N-end rule pathway of protein degradation. Conversion of the resulting N-terminal glutamine to glutamate renders the protein susceptible to arginylation, polyubiquitination and degradation as specified by the N-end rule. Does not act on substrates with internal or C-terminal glutamine and does not act on non-glutamine residues in any position. Involved in immune response. Controls the expression of specific defense-response genes, activates the synthesis pathway for the phytoalexin camalexin, and influences basal resistance to the hemibiotroph pathogen Pseudomonas syringae pv tomato (Pst). This is Protein N-terminal glutamine amidohydrolase from Arabidopsis thaliana (Mouse-ear cress).